The primary structure comprises 226 residues: MRIIALPLPNQRVFLHCYPSEYLAKKVTIHDKIINRIYKYWDSWSASKSYTKQKVVSLGNRILHATPYEENFLRAIAPVKKLNDTELHQTLYIEHPPNLESSTILAELNRSKQLQKTHTNYLIGNIIGLPLTIPFILIPLIPNIPGFYLCYRAYCNFRAIQGSIQLARVMSIENIQMQESEKLEKALKLFTNGDATPLNALIGHPDFVDRYKRAVAQEQRKSKIIK.

A helical membrane pass occupies residues 121-141 (YLIGNIIGLPLTIPFILIPLI).

To yeast YDL183c.

The protein localises to the membrane. This is an uncharacterized protein from Schizosaccharomyces pombe (strain 972 / ATCC 24843) (Fission yeast).